A 308-amino-acid chain; its full sequence is Inosose dehydratase (308 aa).

This sequence belongs to the IolE/MocC family. Glutathione serves as cofactor. The cofactor is Co(2+). Requires Mn(2+) as cofactor.

It catalyses the reaction scyllo-inosose = 3D-3,5/4-trihydroxycyclohexane-1,2-dione + H2O. It functions in the pathway polyol metabolism; myo-inositol degradation into acetyl-CoA; acetyl-CoA from myo-inositol: step 2/7. Catalyzes the dehydration of inosose (2-keto-myo-inositol, 2KMI or 2,4,6/3,5-pentahydroxycyclohexanone) to 3D-(3,5/4)-trihydroxycyclohexane-1,2-dione (D-2,3-diketo-4-deoxy-epi-inositol). This is Inosose dehydratase from Geobacillus kaustophilus (strain HTA426).